The following is an 871-amino-acid chain: Protein argonaute-2 (871 aa).

One can recognise a PAZ domain in the interval 232–351 (PVIEFMCEVL…LPLEVCNIVA (120 aa)). Interaction with guide RNA regions lie at residues 314–319 (YFKDRH) and 536–578 (GKTP…LCLK). The Piwi domain occupies 529–830 (LVVVILPGKT…VAFRARYHLV (302 aa)). Residues 599-602 (FQQP) form an interaction with GW182 family members region. Aspartate 609 contacts a divalent metal cation. An interaction with GW182 family members region spans residues 662–672 (LIQFYKSTRFK). Aspartate 681 serves as a coordination point for a divalent metal cation. Interaction with guide RNA stretches follow at residues 721–722 (KR), 765–773 (HAGIQGTSR), and 802–824 (YVRCTRSVSIPAPAYYAHLVAFR). Histidine 819 contributes to the a divalent metal cation binding site. The segment at 834-856 (HDSAEGSHTSGQSNGRDQQALAK) is disordered. Over residues 839–850 (GSHTSGQSNGRD) the composition is skewed to polar residues.

The protein belongs to the argonaute family. Ago subfamily. Component of the RISC loading complex (RLC), or micro-RNA (miRNA) loading complex (miRLC), which is composed of dicer1, ago2 and tarbp2. Note that the trimeric RLC/miRLC is also referred to as RISC. It depends on Mg(2+) as a cofactor. The cofactor is Mn(2+).

The protein localises to the cytoplasm. The protein resides in the P-body. It carries out the reaction Endonucleolytic cleavage to 5'-phosphomonoester.. Its function is as follows. Required for RNA-mediated gene silencing (RNAi) by the RNA-induced silencing complex (RISC). The 'minimal RISC' appears to include ago2 bound to a short guide RNA such as a microRNA (miRNA) or short interfering RNA (siRNA). These guide RNAs direct RISC to complementary mRNAs that are targets for RISC-mediated gene silencing. The precise mechanism of gene silencing depends on the degree of complementarity between the miRNA or siRNA and its target. Binding of RISC to a perfectly complementary mRNA generally results in silencing due to endonucleolytic cleavage of the mRNA specifically by ago2. Binding of RISC to a partially complementary mRNA results in silencing through inhibition of translation, and this is independent of endonuclease activity. The inhibition of translational initiation leads to the accumulation of the affected mRNA in cytoplasmic processing bodies (P-bodies), where mRNA degradation may subsequently occur. This is Protein argonaute-2 (ago2) from Xenopus tropicalis (Western clawed frog).